A 301-amino-acid chain; its full sequence is Rhodopsin (301 aa).

The Extracellular segment spans residues 1–18 (LHMIHLHWYQYPPMNPMM). Residues 19-43 (YPLLLIFMLFTGILCLAGNFVTIWV) form a helical membrane-spanning segment. The Cytoplasmic portion of the chain corresponds to 44-55 (FMNTKSLRTPAN). The helical transmembrane segment at 56–78 (LLVVNLAMSDFLMMFTMFPPMMV) threads the bilayer. At 79–92 (TCYYHTWTLGPTFC) the chain is on the extracellular side. A disulfide bridge links Cys92 with Cys169. The chain crosses the membrane as a helical span at residues 93-115 (QVYGFLGNLCGCASIWTMVFITF). Positions 116–118 (DRY) match the 'Ionic lock' involved in activated form stabilization motif. Residues 116–134 (DRYNVIVKGVAGEPLSTKK) are Cytoplasmic-facing. A helical membrane pass occupies residues 135-155 (ASLWILIVWVLSLAWCMAPFF). Residues 156 to 182 (GWNRYVPEGNLTGCGTDYLSEDILSRS) are Extracellular-facing. Asn165 carries an N-linked (GlcNAc...) asparagine glycan. Residues 183 to 204 (YLYIYSTWVYFLPLTITIYCYV) form a helical membrane-spanning segment. Topologically, residues 205 to 245 (FIIKAVAAHEKGMRDQAKKMGIKSLRNEEAQKTSAECRLAK) are cytoplasmic. A helical transmembrane segment spans residues 246–267 (IAMTTVALWFIAWTPYLLINWV). Residues 268 to 278 (GMFARSYLSPV) are Extracellular-facing. A helical transmembrane segment spans residues 279 to 300 (YTIWGYVFAKANAVYNPIVYAI). Lys288 is subject to N6-(retinylidene)lysine.

This sequence belongs to the G-protein coupled receptor 1 family. Opsin subfamily. In terms of assembly, homodimer. Interacts with GNAQ. Contains one covalently linked retinal chromophore.

Its subcellular location is the cell projection. It is found in the rhabdomere membrane. Photoreceptor required for image-forming vision at low light intensity. Can use both retinal and 3-dehydroretinal as visual pigment. Light-induced isomerization of 11-cis to all-trans retinal triggers a conformational change that activates signaling via G-proteins. Signaling via GNAQ probably mediates the activation of phospholipase C. The sequence is that of Rhodopsin (RHO) from Procambarus milleri (Miami cave crayfish).